The chain runs to 330 residues: Aquaporin Lacbi1:307192 (330 aa).

Residues 1–40 are Cytoplasmic-facing; it reads MSATPIIHLRDVKKRTGVLNAWERVRNKPQVHWAMECFAE. The chain crosses the membrane as a helical span at residues 41–61; that stretch reads ALGVFFYVYFGLGSTAAWVIG. Residues 62-71 are Extracellular-facing; the sequence is NILKQSGLSS. A helical transmembrane segment spans residues 72 to 92; the sequence is VFQIGFAYAFGILFAIGVCAA. Residues 93–124 are Cytoplasmic-facing; sequence TSGGHFNPCVTIAFTIFRGFPPLKAVRYIVAQ. Residues 99–101 carry the NPA 1 motif; that stretch reads NPC. A helical transmembrane segment spans residues 125–145; sequence ILGAYIASALVYNQWKVLIVE. Topologically, residues 146-157 are extracellular; sequence SELLLKQAGVYE. Residues 158–178 form a helical membrane-spanning segment; sequence TTMFTPNGPAGIFALYLLPGA. At 179-183 the chain is on the cytoplasmic side; that stretch reads QTLPR. A helical transmembrane segment spans residues 184–204; the sequence is AFLNEFVNCFVLALVIWAALD. At 205 to 207 the chain is on the extracellular side; sequence PTS. A helical membrane pass occupies residues 208–228; it reads FMIPPVMAPFIIAAAYAGSIW. Residues 229 to 264 lie on the Cytoplasmic side of the membrane; it reads GYAVPAISLNSARDIGCRLFALTIWGKSAAGGSYSA. An NPA 2 motif is present at residues 238–240; it reads NSA. A helical transmembrane segment spans residues 265–285; the sequence is ITALVNIPATLLAAVVYELFL. Residues 286–330 lie on the Extracellular side of the membrane; the sequence is VDSDRVVAGSHLEFMNVAANHRRHRHQAEDDNHGDADDSSQEKPV. Positions 308–330 are disordered; sequence RHRHQAEDDNHGDADDSSQEKPV. Residues 312-330 are compositionally biased toward basic and acidic residues; it reads QAEDDNHGDADDSSQEKPV.

Belongs to the MIP/aquaporin (TC 1.A.8) family.

It localises to the membrane. Its function is as follows. Water channel-like protein that does not show transport of water nor ammonium across membranes. In Laccaria bicolor (strain S238N-H82 / ATCC MYA-4686) (Bicoloured deceiver), this protein is Aquaporin Lacbi1:307192.